A 113-amino-acid chain; its full sequence is Iron-sulfur cluster insertion protein ErpA (113 aa).

The iron-sulfur cluster site is built by Cys41, Cys105, and Cys107.

Belongs to the HesB/IscA family. As to quaternary structure, homodimer. Iron-sulfur cluster is required as a cofactor.

Required for insertion of 4Fe-4S clusters for at least IspG. The sequence is that of Iron-sulfur cluster insertion protein ErpA from Actinobacillus succinogenes (strain ATCC 55618 / DSM 22257 / CCUG 43843 / 130Z).